We begin with the raw amino-acid sequence, 149 residues long: Mediator of RNA polymerase II transcription subunit 9 (149 aa).

The segment at 18–64 is disordered; that stretch reads TNPTLDKPNAEATKEEFSSAENRDEKDYLTNQQPKNLSTPSTSSNGE. Positions 25-45 are enriched in basic and acidic residues; that stretch reads PNAEATKEEFSSAENRDEKDY. The segment covering 46-63 has biased composition (polar residues); the sequence is LTNQQPKNLSTPSTSSNG. Short sequence motifs (nuclear localization signal) lie at residues 77–99 and 136–149; these read RKDPNNLSNQLETLTGSIRHRLK and KRDVLDDLYRKLQR.

The protein belongs to the Mediator complex subunit 9 family. As to quaternary structure, component of the Mediator complex, which is composed of at least 21 subunits that form three structurally distinct submodules. The Mediator head module contains MED6, MED8, MED11, SRB4/MED17, SRB5/MED18, ROX3/MED19, SRB2/MED20 and SRB6/MED22, the middle module contains MED1, MED4, NUT1/MED5, MED7, CSE2/MED9, NUT2/MED10, SRB7/MED21 and SOH1/MED31, and the tail module contains MED2, PGD1/MED3, RGR1/MED14, GAL11/MED15 and SIN4/MED16. The head and the middle modules interact directly with RNA polymerase II, whereas the elongated tail module interacts with gene-specific regulatory proteins. CSE2/MED9 interacts directly with MED4.

Its subcellular location is the nucleus. In terms of biological role, component of the Mediator complex, a coactivator involved in the regulated transcription of nearly all RNA polymerase II-dependent genes. Mediator functions as a bridge to convey information from gene-specific regulatory proteins to the basal RNA polymerase II transcription machinery. The Mediator complex, having a compact conformation in its free form, is recruited to promoters by direct interactions with regulatory proteins and serves for the assembly of a functional preinitiation complex with RNA polymerase II and the general transcription factors. The Mediator complex unfolds to an extended conformation and partially surrounds RNA polymerase II, specifically interacting with the unphosphorylated form of the C-terminal domain (CTD) of RNA polymerase II. The Mediator complex dissociates from the RNA polymerase II holoenzyme and stays at the promoter when transcriptional elongation begins. This Saccharomyces cerevisiae (strain ATCC 204508 / S288c) (Baker's yeast) protein is Mediator of RNA polymerase II transcription subunit 9 (CSE2).